Consider the following 482-residue polypeptide: tRNA sulfurtransferase (482 aa).

A THUMP domain is found at 61–165 (LAIRDALTRI…DDRLLLIKGR (105 aa)). ATP-binding positions include 183 to 184 (LI), Lys-265, Gly-287, and Gln-296. Residues Cys-344 and Cys-456 are joined by a disulfide bond. Positions 404 to 482 (FGPNDVILDI…GFANVKVYRP (79 aa)) constitute a Rhodanese domain. Cys-456 functions as the Cysteine persulfide intermediate in the catalytic mechanism.

It belongs to the ThiI family.

It localises to the cytoplasm. The catalysed reaction is [ThiI sulfur-carrier protein]-S-sulfanyl-L-cysteine + a uridine in tRNA + 2 reduced [2Fe-2S]-[ferredoxin] + ATP + H(+) = [ThiI sulfur-carrier protein]-L-cysteine + a 4-thiouridine in tRNA + 2 oxidized [2Fe-2S]-[ferredoxin] + AMP + diphosphate. It carries out the reaction [ThiS sulfur-carrier protein]-C-terminal Gly-Gly-AMP + S-sulfanyl-L-cysteinyl-[cysteine desulfurase] + AH2 = [ThiS sulfur-carrier protein]-C-terminal-Gly-aminoethanethioate + L-cysteinyl-[cysteine desulfurase] + A + AMP + 2 H(+). It participates in cofactor biosynthesis; thiamine diphosphate biosynthesis. In terms of biological role, catalyzes the ATP-dependent transfer of a sulfur to tRNA to produce 4-thiouridine in position 8 of tRNAs, which functions as a near-UV photosensor. Also catalyzes the transfer of sulfur to the sulfur carrier protein ThiS, forming ThiS-thiocarboxylate. This is a step in the synthesis of thiazole, in the thiamine biosynthesis pathway. The sulfur is donated as persulfide by IscS. The protein is tRNA sulfurtransferase of Salmonella heidelberg (strain SL476).